Consider the following 430-residue polypeptide: Ribosomal protein uS12 methylthiotransferase RimO (430 aa).

One can recognise an MTTase N-terminal domain in the interval 1 to 116; sequence MRVGIKVLGC…IANALEKGTD (116 aa). [4Fe-4S] cluster contacts are provided by cysteine 10, cysteine 46, cysteine 79, cysteine 148, cysteine 152, and cysteine 155. The region spanning 134 to 365 is the Radical SAM core domain; sequence LEERPYAYVK…LLQAEISNSR (232 aa). The region spanning 367-430 is the TRAM domain; sequence DRFIGRKLKF…DEYDMWGSVT (64 aa).

Belongs to the methylthiotransferase family. RimO subfamily. The cofactor is [4Fe-4S] cluster.

It localises to the cytoplasm. It catalyses the reaction L-aspartate(89)-[ribosomal protein uS12]-hydrogen + (sulfur carrier)-SH + AH2 + 2 S-adenosyl-L-methionine = 3-methylsulfanyl-L-aspartate(89)-[ribosomal protein uS12]-hydrogen + (sulfur carrier)-H + 5'-deoxyadenosine + L-methionine + A + S-adenosyl-L-homocysteine + 2 H(+). Catalyzes the methylthiolation of an aspartic acid residue of ribosomal protein uS12. The protein is Ribosomal protein uS12 methylthiotransferase RimO of Thermotoga sp. (strain RQ2).